Consider the following 536-residue polypeptide: Membrane protein insertase YidC (536 aa).

A helical transmembrane segment spans residues Ile14–Pro34. The disordered stretch occupies residues Ser43–Val69. Over residues Ala53–Ser68 the composition is skewed to polar residues. 5 consecutive transmembrane segments (helical) span residues Val312–Leu332, Trp339–Tyr359, Gly401–Ile421, Trp436–Met456, and Pro484–Val504.

It belongs to the OXA1/ALB3/YidC family. Type 1 subfamily. Interacts with the Sec translocase complex via SecD. Specifically interacts with transmembrane segments of nascent integral membrane proteins during membrane integration.

The protein localises to the cell inner membrane. Required for the insertion and/or proper folding and/or complex formation of integral membrane proteins into the membrane. Involved in integration of membrane proteins that insert both dependently and independently of the Sec translocase complex, as well as at least some lipoproteins. Aids folding of multispanning membrane proteins. The protein is Membrane protein insertase YidC of Wolinella succinogenes (strain ATCC 29543 / DSM 1740 / CCUG 13145 / JCM 31913 / LMG 7466 / NCTC 11488 / FDC 602W) (Vibrio succinogenes).